The sequence spans 1367 residues: Mediator of RNA polymerase II transcription subunit 23 (1367 aa).

The segment at 1343–1367 (PPQALNSGSPAPQSNQVPASLPVTQ) is disordered. The segment covering 1346-1367 (ALNSGSPAPQSNQVPASLPVTQ) has biased composition (polar residues).

The protein belongs to the Mediator complex subunit 23 family. In terms of assembly, component of the Mediator complex, which is composed of MED1, MED4, MED6, MED7, MED8, MED9, MED10, MED11, MED12, MED13, MED13L, MED14, MED15, MED16, MED17, MED18, MED19, MED20, MED21, MED22, MED23, MED24, MED25, MED26, MED27, MED29, MED30, MED31, CCNC, CDK8 and CDC2L6/CDK11. The MED12, MED13, CCNC and CDK8 subunits form a distinct module termed the CDK8 module. Mediator containing the CDK8 module is less active than Mediator lacking this module in supporting transcriptional activation. Individual preparations of the Mediator complex lacking one or more distinct subunits have been variously termed ARC, CRSP, DRIP, PC2, SMCC and TRAP. Interacts with CEBPB (when not methylated), CTNNB1, and GLI3. Interacts with CDK8 and ELK1.

Its subcellular location is the nucleus. Component of the Mediator complex, a coactivator involved in the regulated transcription of nearly all RNA polymerase II-dependent genes. Mediator functions as a bridge to convey information from gene-specific regulatory proteins to the basal RNA polymerase II transcription machinery. Mediator is recruited to promoters by direct interactions with regulatory proteins and serves as a scaffold for the assembly of a functional pre-initiation complex with RNA polymerase II and the general transcription factors. Also required for transcriptional activation subsequent to the assembly of the pre-initiation complex. Required for transcriptional activation by adenovirus E1A protein. Required for ELK1-dependent transcriptional activation in response to activated Ras signaling. The protein is Mediator of RNA polymerase II transcription subunit 23 (Med23) of Mus musculus (Mouse).